Consider the following 389-residue polypeptide: MVTVEEVRKAQRAEGPATVLAIGTATPPNCLDQSTYPDYYFRITNSEHKTELKEKFQRMCDKSMIKKRYMYLTEEILKEHPNMCAYMAPSLDARQDMVVVEIPKLGKEAAVKAIKEWGQPKSKITHLVFCTTSGVDMPGADYQLTKLLGLRPSVKRLMMYQQGCFAGGTVLRLAKDLAENNRGARVLVVCSEITAVTFRGPSDTHLDSLVGQALFGDGAAAIIVGADPLPEVEKPLFEVVSTAQTILPDSDGAIDGHLREVGVTFHLLKDVPGLISKNIEKSLVEAFQPLGISDWNSLFWIAHPGGPAILDQVEEKLALKPEKLGATRHVLSEYGNMSSACVLFILDEMRRKSAEKGLKTTGEGLDWGVLFGFGPGLTVETVVLHSLTT.

The active site involves C164.

It belongs to the thiolase-like superfamily. Chalcone/stilbene synthases family.

The catalysed reaction is (E)-4-coumaroyl-CoA + 3 malonyl-CoA + 3 H(+) = 2',4,4',6'-tetrahydroxychalcone + 3 CO2 + 4 CoA. It participates in secondary metabolite biosynthesis; flavonoid biosynthesis. Functionally, the primary product of this enzyme is 4,2',4',6'-tetrahydroxychalcone (also termed naringenin-chalcone or chalcone) which can under specific conditions spontaneously isomerize into naringenin. The sequence is that of Chalcone synthase (CHS1) from Casuarina glauca (Swamp oak).